Here is a 174-residue protein sequence, read N- to C-terminus: Peptide methionine sulfoxide reductase MsrA (174 aa).

The active site involves cysteine 10.

It belongs to the MsrA Met sulfoxide reductase family.

It catalyses the reaction L-methionyl-[protein] + [thioredoxin]-disulfide + H2O = L-methionyl-(S)-S-oxide-[protein] + [thioredoxin]-dithiol. It carries out the reaction [thioredoxin]-disulfide + L-methionine + H2O = L-methionine (S)-S-oxide + [thioredoxin]-dithiol. Its function is as follows. Has an important function as a repair enzyme for proteins that have been inactivated by oxidation. Catalyzes the reversible oxidation-reduction of methionine sulfoxide in proteins to methionine. The chain is Peptide methionine sulfoxide reductase MsrA from Pseudarthrobacter chlorophenolicus (strain ATCC 700700 / DSM 12829 / CIP 107037 / JCM 12360 / KCTC 9906 / NCIMB 13794 / A6) (Arthrobacter chlorophenolicus).